The chain runs to 313 residues: Short-chain dehydrogenase/reductase family 9C member 7 (313 aa).

29–53 (FITGCDSGFGNLLARQLVDRGMRVL) contacts NADP(+). Position 160 (Ser160) interacts with substrate. Tyr172 functions as the Proton acceptor in the catalytic mechanism. The residue at position 185 (Ser185) is a Phosphoserine.

This sequence belongs to the short-chain dehydrogenases/reductases (SDR) family.

It is found in the cytoplasm. It carries out the reaction a N-[omega-(9R,10R)-epoxy-(13R)-hydroxy-(11E)-octadecenoyloxy]acyl-beta-D-glucosyl-(1&lt;-&gt;1)-sphing-4E-enine + NAD(+) = a N-[omega-(9R,10R)-epoxy-13-oxo-(11E)-octadecenoyloxy]acyl-beta-D-glucosyl-(1&lt;-&gt;1)-sphing-4E-enine + NADH + H(+). It catalyses the reaction a N-[omega-(9R,10R)-epoxy-(13R)-hydroxy-(11E)-octadecenoyloxy]-acylsphing-4E-enine + NAD(+) = a N-[omega-(9R,10R)-epoxy-13-oxo-(11E)-octadecenoyloxy]-acylsphing-4E-enine + NADH + H(+). Its function is as follows. Plays a crucial role in the formation of the epidermal permeability barrier. Catalyzes the NAD+-dependent dehydrogenation of the linoleate 9,10-trans-epoxy-11E-13-alcohol esterified in omega-O-acylceramides (such as in N-[omega-(9R,10R)-epoxy-(13R)-hydroxy-(11E)-octadecenoyloxy]-acylsphing-4E-enine) to the corresponding 13-ketone, the reactive moiety required for binding of epidermal ceramides to proteins. Displays weak conversion of all-trans-retinal to all-trans-retinol in the presence of NADH. Has apparently no steroid dehydrogenase activity. This chain is Short-chain dehydrogenase/reductase family 9C member 7 (SDR9C7), found in Bos taurus (Bovine).